Here is a 99-residue protein sequence, read N- to C-terminus: uncharacterized protein (99 aa).

A disordered region spans residues Met-1 to Phe-99. A compositionally biased stretch (polar residues) spans Gln-19–Glu-29.

This is an uncharacterized protein from Schizosaccharomyces pombe (strain 972 / ATCC 24843) (Fission yeast).